The following is a 369-amino-acid chain: NAD(P)H-quinone oxidoreductase subunit 1, chloroplastic (369 aa).

Helical transmembrane passes span 29-49 (IWII…VLVI), 97-117 (IWLF…SYLV), 129-149 (LGIG…GLLM), 167-187 (AAQS…ISLL), 205-225 (LLGW…ISSL), 255-275 (FGLF…FVTV), 305-325 (IINA…FLFV), and 348-368 (FLLP…ILLL).

This sequence belongs to the complex I subunit 1 family. In terms of assembly, NDH is composed of at least 16 different subunits, 5 of which are encoded in the nucleus.

The protein resides in the plastid. It localises to the chloroplast thylakoid membrane. The enzyme catalyses a plastoquinone + NADH + (n+1) H(+)(in) = a plastoquinol + NAD(+) + n H(+)(out). The catalysed reaction is a plastoquinone + NADPH + (n+1) H(+)(in) = a plastoquinol + NADP(+) + n H(+)(out). Its function is as follows. NDH shuttles electrons from NAD(P)H:plastoquinone, via FMN and iron-sulfur (Fe-S) centers, to quinones in the photosynthetic chain and possibly in a chloroplast respiratory chain. The immediate electron acceptor for the enzyme in this species is believed to be plastoquinone. Couples the redox reaction to proton translocation, and thus conserves the redox energy in a proton gradient. In Angiopteris evecta (Mule's foot fern), this protein is NAD(P)H-quinone oxidoreductase subunit 1, chloroplastic.